A 119-amino-acid polypeptide reads, in one-letter code: Large ribosomal subunit protein bL20 (119 aa).

The protein belongs to the bacterial ribosomal protein bL20 family.

Functionally, binds directly to 23S ribosomal RNA and is necessary for the in vitro assembly process of the 50S ribosomal subunit. It is not involved in the protein synthesizing functions of that subunit. The sequence is that of Large ribosomal subunit protein bL20 from Nitrosospira multiformis (strain ATCC 25196 / NCIMB 11849 / C 71).